The chain runs to 678 residues: Secretin ExeD (678 aa).

A signal peptide spans 1-25; sequence MINKGKSWRLATVAAALMMAGSAWA. Residues 26-122 form an N0 region; it reads TEYSASFKNA…VVDETNPGIG (97 aa). Positions 124-188 are N1; that stretch reads EMVTRVVPVR…EVVRRVDKAG (65 aa). Positions 189 to 264 are N2; the sequence is DQEVDIIKLR…MVRQLDRDLQ (76 aa). The interval 267–347 is N3; it reads GNTRVFYLKY…ELEQVVAKLD (81 aa). The segment at 352–602 is secretin; it reads QVLVEAIIVE…VFIRPTILRD (251 aa). A s domain region spans residues 604 to 678; it reads HVYSGISSNK…GAQPFVQGNK (75 aa).

This sequence belongs to the bacterial secretin family. GSP D subfamily. In terms of assembly, forms a cylindrical channel with 15 subunits.

The protein resides in the cell outer membrane. In terms of biological role, involved in a type II secretion system (T2SS, formerly general secretion pathway, GSP) for the export of proteins. This subunit forms the outer membrane channel. The sequence is that of Secretin ExeD (exeD) from Aeromonas salmonicida.